The chain runs to 858 residues: Leucine--tRNA ligase (858 aa).

Residues 42–52 carry the 'HIGH' region motif; that stretch reads PYPSGRLHMGH. The 'KMSKS' region signature appears at 618–622; the sequence is KMSKS. ATP is bound at residue Lys-621.

It belongs to the class-I aminoacyl-tRNA synthetase family.

The protein resides in the cytoplasm. The enzyme catalyses tRNA(Leu) + L-leucine + ATP = L-leucyl-tRNA(Leu) + AMP + diphosphate. This Aliivibrio fischeri (strain ATCC 700601 / ES114) (Vibrio fischeri) protein is Leucine--tRNA ligase.